The primary structure comprises 123 residues: Small ribosomal subunit protein uS12 (123 aa).

Positions 1-23 are disordered; the sequence is MPTISQLVKKGREKVEKKTKSPA. Asp-89 is modified (3-methylthioaspartic acid).

The protein belongs to the universal ribosomal protein uS12 family. In terms of assembly, part of the 30S ribosomal subunit. Contacts proteins S8 and S17. May interact with IF1 in the 30S initiation complex.

In terms of biological role, with S4 and S5 plays an important role in translational accuracy. Its function is as follows. Interacts with and stabilizes bases of the 16S rRNA that are involved in tRNA selection in the A site and with the mRNA backbone. Located at the interface of the 30S and 50S subunits, it traverses the body of the 30S subunit contacting proteins on the other side and probably holding the rRNA structure together. The combined cluster of proteins S8, S12 and S17 appears to hold together the shoulder and platform of the 30S subunit. This chain is Small ribosomal subunit protein uS12, found in Thermodesulfovibrio yellowstonii (strain ATCC 51303 / DSM 11347 / YP87).